The sequence spans 277 residues: uncharacterized protein (277 aa).

Residues 232 to 262 (NNESAICESQASSKEDERSDKTTSSSKKKSF) are disordered. The span at 234 to 243 (ESAICESQAS) shows a compositional bias: polar residues.

It localises to the cytoplasm. The protein resides in the nucleus. This is an uncharacterized protein from Schizosaccharomyces pombe (strain 972 / ATCC 24843) (Fission yeast).